We begin with the raw amino-acid sequence, 88 residues long: Small ribosomal subunit protein bS16 (88 aa).

This sequence belongs to the bacterial ribosomal protein bS16 family.

This Sorangium cellulosum (strain So ce56) (Polyangium cellulosum (strain So ce56)) protein is Small ribosomal subunit protein bS16.